A 158-amino-acid chain; its full sequence is Transcription elongation factor GreA (158 aa).

It belongs to the GreA/GreB family.

Its function is as follows. Necessary for efficient RNA polymerase transcription elongation past template-encoded arresting sites. The arresting sites in DNA have the property of trapping a certain fraction of elongating RNA polymerases that pass through, resulting in locked ternary complexes. Cleavage of the nascent transcript by cleavage factors such as GreA or GreB allows the resumption of elongation from the new 3'terminus. GreA releases sequences of 2 to 3 nucleotides. The protein is Transcription elongation factor GreA of Yersinia pestis.